The following is a 182-amino-acid chain: CKLF-like MARVEL transmembrane domain-containing protein 3 (182 aa).

Residues methionine 1–proline 12 are compositionally biased toward acidic residues. Positions methionine 1–glycine 21 are disordered. Positions phenylalanine 36–alanine 155 constitute an MARVEL domain. The next 3 helical transmembrane spans lie at alanine 64 to alanine 84, methionine 101 to isoleucine 121, and alanine 131 to phenylalanine 151.

It belongs to the chemokine-like factor family. In terms of tissue distribution, expressed in the leukocytes, placenta and testis.

It is found in the membrane. This chain is CKLF-like MARVEL transmembrane domain-containing protein 3 (CMTM3), found in Homo sapiens (Human).